Here is a 154-residue protein sequence, read N- to C-terminus: Ribosomal RNA large subunit methyltransferase H (154 aa).

S-adenosyl-L-methionine-binding residues include L71 and G103.

Belongs to the RNA methyltransferase RlmH family. Homodimer.

It localises to the cytoplasm. It carries out the reaction pseudouridine(1915) in 23S rRNA + S-adenosyl-L-methionine = N(3)-methylpseudouridine(1915) in 23S rRNA + S-adenosyl-L-homocysteine + H(+). Functionally, specifically methylates the pseudouridine at position 1915 (m3Psi1915) in 23S rRNA. The chain is Ribosomal RNA large subunit methyltransferase H from Solidesulfovibrio magneticus (strain ATCC 700980 / DSM 13731 / RS-1) (Desulfovibrio magneticus).